A 428-amino-acid chain; its full sequence is Cell number regulator 13 (428 aa).

A compositionally biased stretch (basic and acidic residues) spans proline 233–aspartate 280. A disordered region spans residues proline 233–glutamine 290. Residues threonine 281–glutamine 290 show a composition bias toward polar residues. A helical transmembrane segment spans residues isoleucine 354–valine 370.

As to expression, expressed in roots, coleoptiles, leaves, stalks, apical meristems, immature ears, embryos, endosperm, pericarp, silks and tassel spikelets. Not detected in pollen.

It is found in the membrane. This chain is Cell number regulator 13 (CNR13), found in Zea mays (Maize).